The following is a 604-amino-acid chain: Prostaglandin G/H synthase 2 (604 aa).

An N-terminal signal peptide occupies residues 1–17; that stretch reads MLFRAVLLCAALGLSQA. The 38-residue stretch at 18–55 folds into the EGF-like domain; that stretch reads ANPCCSNPCQNRGECMSTGFDQYKCDCTRTGFYGENCT. Cystine bridges form between Cys-21-Cys-32, Cys-22-Cys-145, Cys-26-Cys-42, and Cys-44-Cys-54. N-linked (GlcNAc...) asparagine glycosylation occurs at Asn-53. Arg-106 contributes to the substrate binding site. An N-linked (GlcNAc...) asparagine glycan is attached at Asn-130. The Proton acceptor role is filled by His-193. Position 341 (Tyr-341) interacts with substrate. Catalysis depends on Tyr-371, which acts as the For cyclooxygenase activity. His-374 contacts heme b. N-linked (GlcNAc...) asparagine glycosylation is present at Asn-396. Cys-526 carries the S-nitrosocysteine modification. An intrachain disulfide couples Cys-555 to Cys-561. Ser-565 is subject to O-acetylserine; by SPHK1. Residue Asn-580 is glycosylated (N-linked (GlcNAc...) asparagine).

Belongs to the prostaglandin G/H synthase family. As to quaternary structure, homodimer. Requires heme b as cofactor. S-nitrosylation by NOS2 (iNOS) activates enzyme activity. S-nitrosylation may take place on different Cys residues in addition to Cys-526. In terms of processing, acetylated at Ser-565 by SPHK1. During neuroinflammation, acetylation by SPHK1 promotes neuronal secretion of specialized preresolving mediators (SPMs), especially 15-R-lipoxin A4, which results in an increase of phagocytic microglia. Following colon injury, expressed in the wound bed mesenchyme during the first phase of repair, probably by colonic mesenchymal stem cells (at protein level).

The protein resides in the microsome membrane. It is found in the endoplasmic reticulum membrane. It localises to the nucleus inner membrane. Its subcellular location is the nucleus outer membrane. It catalyses the reaction (5Z,8Z,11Z,14Z)-eicosatetraenoate + AH2 + 2 O2 = prostaglandin H2 + A + H2O. The catalysed reaction is (5Z,8Z,11Z,14Z)-eicosatetraenoate + 2 O2 = prostaglandin G2. It carries out the reaction prostaglandin G2 + AH2 = prostaglandin H2 + A + H2O. The enzyme catalyses (5Z,8Z,11Z,14Z,17Z)-eicosapentaenoate + 2 O2 = prostaglandin G3. It catalyses the reaction prostaglandin G3 + AH2 = prostaglandin H3 + A + H2O. The catalysed reaction is (8Z,11Z,14Z)-eicosatrienoate + 2 O2 = prostaglandin G1. It carries out the reaction prostaglandin G1 + AH2 = prostaglandin H1 + A + H2O. The enzyme catalyses 2-(5Z,8Z,11Z,14Z)-eicosatetraenoyl-sn-glycero-3-phosphoethanolamine + 2 O2 = 2-(prostaglandin G2)-sn-glycero-3-phosphoethanolamine. It catalyses the reaction 2-(prostaglandin G2)-sn-glycero-3-phosphoethanolamine + AH2 = 2-(prostaglandin H2)-sn-glycero-3-phosphoethanolamine + A + H2O. The catalysed reaction is 2-(5Z,8Z,11Z,14Z)-eicosatetraenoyl-sn-glycero-3-phosphocholine + 2 O2 = 2-(prostaglandin G2)-sn-glycero-3-phosphocholine. It carries out the reaction 2-(prostaglandin G2)-sn-glycero-3-phosphocholine + AH2 = 2-(prostaglandin H2)-sn-glycero-3-phosphocholine + A + H2O. The enzyme catalyses (15S)-hydroperoxy-(5Z,8Z,11Z,13E)-eicosatetraenoate + AH2 = (15S)-hydroxy-(5Z,8Z,11Z,13E)-eicosatetraenoate + A + H2O. It catalyses the reaction 2-(5Z,8Z,11Z,14Z)-eicosatetraenoyl-sn-glycero-3-phosphocholine + AH2 + O2 = 2-[(15S)-hydroxy-(5Z,8Z,11Z,13E)-eicosatetraenoyl]-sn-glycero-3-phosphocholine + A + H2O. The catalysed reaction is 2-(5Z,8Z,11Z,14Z)-eicosatetraenoyl-sn-glycero-3-phosphocholine + AH2 + O2 = 2-[(15R)-hydroxy-(5Z,8Z,11Z,13E)-eicosatetraenoyl]-sn-glycero-3-phosphocholine + A + H2O. It carries out the reaction 2-(5Z,8Z,11Z,14Z)-eicosatetraenoyl-sn-glycero-3-phosphocholine + AH2 + O2 = 2-[(11R)-hydroxy-(5Z,8Z,12E,14Z)-eicosatetraenoyl]-sn-glycero-3-phosphocholine + A + H2O. The enzyme catalyses (9Z,12Z)-octadecadienoate + AH2 + O2 = 9-hydroxy-(10E,12Z)-octadecadienoate + A + H2O. It catalyses the reaction (9Z,12Z)-octadecadienoate + AH2 + O2 = 13-hydroxy-(9Z,11E)-octadecadienoate + A + H2O. The catalysed reaction is (5Z,8Z,11Z,14Z)-eicosatetraenoate + AH2 + O2 = (15R)-hydroxy-(5Z,8Z,11Z,13E)-eicosatetraenoate + A + H2O. It carries out the reaction (5Z,8Z,11Z,14Z)-eicosatetraenoate + AH2 + O2 = (11R)-hydroxy-(5Z,8Z,12E,14Z)-eicosatetraenoate + A + H2O. The enzyme catalyses (5Z,8Z,11Z,14Z,17Z)-eicosapentaenoate + AH2 + O2 = (11R)-hydroxy-(5Z,8Z,12E,14Z,17Z)-eicosapentaenoate + A + H2O. It catalyses the reaction (5Z,8Z,11Z,14Z,17Z)-eicosapentaenoate + AH2 + O2 = (18S)-hydroxy-(5Z,8Z,11Z,14Z,16E)-eicosapentaenoate + A + H2O. The catalysed reaction is (5Z,8Z,11Z,14Z,17Z)-eicosapentaenoate + AH2 + O2 = (18R)-hydroxy-(5Z,8Z,11Z,14Z,16E)-eicosapentaenoate + A + H2O. It carries out the reaction (5Z,8Z,11Z,14Z,17Z)-eicosapentaenoate + AH2 + O2 = (15R)-hydroxy-(5Z,8Z,11Z,13E,17Z)-eicosapentaenoate + A + H2O. The enzyme catalyses (5Z,8Z,11Z,14Z,17Z)-eicosapentaenoate + AH2 + O2 = (15S)-hydroxy-(5Z,8Z,11Z,13E,17Z)-eicosapentaenoate + A + H2O. It catalyses the reaction (7Z,10Z,13Z,16Z,19Z)-docosapentaenoate + AH2 + O2 = 13R-hydroxy-(7Z,10Z,14E,16Z,19Z)-docosapentaenoate + A + H2O. The catalysed reaction is (4Z,7Z,10Z,13Z,16Z,19Z)-docosahexaenoate + AH2 + O2 = 13-hydroxy-(4Z,7Z,10Z,14E,16Z,19Z)-docosahexaenoate + A + H2O. It carries out the reaction (5S)-hydroxy-(6E,8Z,11Z,14Z)-eicosatetraenoate + AH2 + O2 = (5S,15R)-dihydroxy-(6E,8Z,11Z,13E)-eicosatetraenoate + A + H2O. The enzyme catalyses (4Z,7Z,10Z,13Z,16Z,19Z)-docosahexaenoate + AH2 + O2 = 17R-hydroxy-(4Z,7Z,10Z,13Z,15E,19Z)-docosahexaenoate + A + H2O. It catalyses the reaction (5S)-hydroxy-(6E,8Z,11Z,14Z)-eicosatetraenoate + AH2 + O2 = (5S,15S)-dihydroxy-(6E,8Z,11Z,13E)-eicosatetraenoate + A + H2O. The catalysed reaction is (5S)-hydroxy-(6E,8Z,11Z,14Z)-eicosatetraenoate + AH2 + O2 = (5S,11R)-dihydroxy-(6E,8Z,12E,14Z)-eicosatetraenoate + A + H2O. It carries out the reaction 2-(5Z,8Z,11Z,14Z-eicosatetraenoyl)-glycerol + 2 O2 = 2-glyceryl-prostaglandin G2. The enzyme catalyses 2-glyceryl-prostaglandin G2 + AH2 = 2-glyceryl-prostaglandin H2 + A + H2O. It catalyses the reaction (5Z,8Z,11Z,14Z)-eicosatetraenoate + O2 = (15R)-hydroperoxy-(5Z,8Z,11Z,13E)-eicosatetraenoate. The catalysed reaction is (5Z,8Z,11Z,14Z)-eicosatetraenoate + O2 = 11R-hydroperoxy-(5Z,8Z,12E,14Z)-eicosatetraenoate. It carries out the reaction (9Z,12Z)-octadecadienoate + AH2 + O2 = (9R)-hydroxy-(10E,12Z)-octadecadienoate + A + H2O. The enzyme catalyses (9Z,12Z)-octadecadienoate + AH2 + O2 = (9S)-hydroxy-(10E,12Z)-octadecadienoate + A + H2O. It catalyses the reaction (9Z,12Z)-octadecadienoate + AH2 + O2 = (13S)-hydroxy-(9Z,11E)-octadecadienoate + A + H2O. The catalysed reaction is (9Z,12Z)-octadecadienoate + AH2 + O2 = (13R)-hydroxy-(9Z,11E)-octadecadienoate + A + H2O. The protein operates within lipid metabolism; prostaglandin biosynthesis. Its activity is regulated as follows. Inhibited by the nonsteroidal anti-inflammatory drugs aspirin, naproxen, diclofenac, meclofenamic acid, indomethacin and their analogs. In terms of biological role, dual cyclooxygenase and peroxidase in the biosynthesis pathway of prostanoids, a class of C20 oxylipins mainly derived from arachidonate, with a particular role in the inflammatory response. The cyclooxygenase activity oxygenates arachidonate (AA, C20:4(n-6)) to the hydroperoxy endoperoxide prostaglandin G2 (PGG2), and the peroxidase activity reduces PGG2 to the hydroxy endoperoxide PGH2, the precursor of all 2-series prostaglandins and thromboxanes. This complex transformation is initiated by abstraction of hydrogen at carbon 13 (with S-stereochemistry), followed by insertion of molecular O2 to form the endoperoxide bridge between carbon 9 and 11 that defines prostaglandins. The insertion of a second molecule of O2 (bis-oxygenase activity) yields a hydroperoxy group in PGG2 that is then reduced to PGH2 by two electrons. Similarly catalyzes successive cyclooxygenation and peroxidation of dihomo-gamma-linoleate (DGLA, C20:3(n-6)) and eicosapentaenoate (EPA, C20:5(n-3)) to corresponding PGH1 and PGH3, the precursors of 1- and 3-series prostaglandins. In an alternative pathway of prostanoid biosynthesis, converts 2-arachidonoyl lysophopholipids to prostanoid lysophopholipids, which are then hydrolyzed by intracellular phospholipases to release free prostanoids. Metabolizes 2-arachidonoyl glycerol yielding the glyceryl ester of PGH2, a process that can contribute to pain response. Generates lipid mediators from n-3 and n-6 polyunsaturated fatty acids (PUFAs) via a lipoxygenase-type mechanism. Oxygenates PUFAs to hydroperoxy compounds and then reduces them to corresponding alcohols. Plays a role in the generation of resolution phase interaction products (resolvins) during both sterile and infectious inflammation. Metabolizes docosahexaenoate (DHA, C22:6(n-3)) to 17R-HDHA, a precursor of the D-series resolvins (RvDs). As a component of the biosynthetic pathway of E-series resolvins (RvEs), converts eicosapentaenoate (EPA, C20:5(n-3)) primarily to 18S-HEPE that is further metabolized by ALOX5 and LTA4H to generate 18S-RvE1 and 18S-RvE2. In vascular endothelial cells, converts docosapentaenoate (DPA, C22:5(n-3)) to 13R-HDPA, a precursor for 13-series resolvins (RvTs) shown to activate macrophage phagocytosis during bacterial infection. In activated leukocytes, contributes to oxygenation of hydroxyeicosatetraenoates (HETE) to diHETES (5,15-diHETE and 5,11-diHETE). Can also use linoleate (LA, (9Z,12Z)-octadecadienoate, C18:2(n-6)) as substrate and produce hydroxyoctadecadienoates (HODEs) in a regio- and stereospecific manner, being (9R)-HODE ((9R)-hydroxy-(10E,12Z)-octadecadienoate) and (13S)-HODE ((13S)-hydroxy-(9Z,11E)-octadecadienoate) its major products. During neuroinflammation, plays a role in neuronal secretion of specialized preresolving mediators (SPMs) 15R-lipoxin A4 that regulates phagocytic microglia. This chain is Prostaglandin G/H synthase 2, found in Mus musculus (Mouse).